Consider the following 141-residue polypeptide: Hemoglobin subunit alpha-A (141 aa).

Positions 1–141 (VLTEEDKSRV…VAKTLVSRYR (141 aa)) constitute a Globin domain. Position 58 (H58) interacts with O2. H87 serves as a coordination point for heme b.

It belongs to the globin family. Heterotetramer of two alpha chains and two beta chains. As to expression, red blood cells.

Functionally, involved in oxygen transport from the lung to the various peripheral tissues. This chain is Hemoglobin subunit alpha-A, found in Drymarchon melanurus erebennus (Texas indigo snake).